We begin with the raw amino-acid sequence, 97 residues long: Class II hydrophobin A (97 aa).

The N-terminal stretch at 1-15 is a signal peptide; that stretch reads MKSVVFASLIASALA. 3 disulfide bridges follow: cysteine 30–cysteine 79, cysteine 40–cysteine 53, and cysteine 80–cysteine 91.

This sequence belongs to the cerato-ulmin hydrophobin family.

It localises to the secreted. The protein resides in the cell wall. Its subcellular location is the vacuole. It is found in the cytoplasmic vesicle. Its function is as follows. Aerial growth, conidiation, and dispersal of filamentous fungi in the environment rely upon a capability of their secreting small amphipathic proteins called hydrophobins (HPBs) with low sequence identity. Class I can self-assemble into an outermost layer of rodlet bundles on aerial cell surfaces, conferring cellular hydrophobicity that supports fungal growth, development and dispersal; whereas Class II form highly ordered films at water-air interfaces through intermolecular interactions but contribute nothing to the rodlet structure. Hyd2A contributes to certain cell wall-related features, such as hydrophobicity but is not involved in cell wall-related events during fungal proliferation in host hemocoel. Does not contribute to conidial hydrophobicity. Involved in insect hemocoel colonization independent of cell hydrophobicity, as well as in the asexual development. The polypeptide is Class II hydrophobin A (Beauveria bassiana (strain ARSEF 2860) (White muscardine disease fungus)).